Consider the following 79-residue polypeptide: MAKIGVENSLTDVQQALQQQGHEVITINSEHDAQGCDCCVVTGQDSNMMGIADTSIKGSVINAHGLTTDEICQQVESRI.

This sequence belongs to the UPF0180 family.

This chain is UPF0180 protein BCAH187_A1552, found in Bacillus cereus (strain AH187).